The chain runs to 496 residues: Probable cytosol aminopeptidase (496 aa).

The Mn(2+) site is built by Lys-266 and Asp-271. Lys-278 is a catalytic residue. The Mn(2+) site is built by Asp-289, Asp-348, and Glu-350. Residue Arg-352 is part of the active site.

It belongs to the peptidase M17 family. The cofactor is Mn(2+).

It is found in the cytoplasm. The catalysed reaction is Release of an N-terminal amino acid, Xaa-|-Yaa-, in which Xaa is preferably Leu, but may be other amino acids including Pro although not Arg or Lys, and Yaa may be Pro. Amino acid amides and methyl esters are also readily hydrolyzed, but rates on arylamides are exceedingly low.. It catalyses the reaction Release of an N-terminal amino acid, preferentially leucine, but not glutamic or aspartic acids.. In terms of biological role, presumably involved in the processing and regular turnover of intracellular proteins. Catalyzes the removal of unsubstituted N-terminal amino acids from various peptides. The sequence is that of Probable cytosol aminopeptidase from Pseudomonas syringae pv. syringae (strain B728a).